The sequence spans 389 residues: Chalcone synthase 6 (389 aa).

The active site involves C164.

This sequence belongs to the thiolase-like superfamily. Chalcone/stilbene synthases family.

The enzyme catalyses (E)-4-coumaroyl-CoA + 3 malonyl-CoA + 3 H(+) = 2',4,4',6'-tetrahydroxychalcone + 3 CO2 + 4 CoA. Its pathway is secondary metabolite biosynthesis; flavonoid biosynthesis. Functionally, the primary product of this enzyme is 4,2',4',6'-tetrahydroxychalcone (also termed naringenin-chalcone or chalcone) which can under specific conditions spontaneously isomerize into naringenin. This is Chalcone synthase 6 (CHS6) from Pisum sativum (Garden pea).